The chain runs to 2604 residues: Probable polyketide synthase 17 (2604 aa).

The region spanning Asn11–Glu433 is the Ketosynthase family 3 (KS3) domain. Active-site for beta-ketoacyl synthase activity residues include Cys179, His316, and His356. The acyl/malonyl transferases stretch occupies residues Gly631 to Tyr664. Residue Ser641 is the For acyl/malonyl transferase activity of the active site. Residues Asn937–Pro1057 form an N-terminal hotdog fold region. Residues Asn937–Gln1216 enclose the PKS/mFAS DH domain. His968 serves as the catalytic Proton acceptor; for dehydratase activity. Residues Ser1072–Gln1216 form a C-terminal hotdog fold region. Asp1132 acts as the Proton donor; for dehydratase activity in catalysis. A disordered region spans residues Gly1357–Asn1407. A compositionally biased stretch (low complexity) spans Ser1363 to Ser1390. Residues Gly2507–Ser2584 form the Carrier domain. O-(pantetheine 4'-phosphoryl)serine is present on Ser2544. Positions Ser2581–Lys2597 are enriched in low complexity. The segment at Ser2581–Thr2604 is disordered.

Requires pantetheine 4'-phosphate as cofactor.

In terms of biological role, probable polyketide synthase. This is Probable polyketide synthase 17 (pks17) from Dictyostelium discoideum (Social amoeba).